The primary structure comprises 40 residues: Protamine-2 (40 aa).

The disordered stretch occupies residues Met1–His40.

In terms of tissue distribution, testis.

The protein localises to the nucleus. It is found in the chromosome. In terms of biological role, protamines substitute for histones in the chromatin of sperm during the haploid phase of spermatogenesis. They compact sperm DNA into a highly condensed, stable and inactive complex. This chain is Protamine-2 (PBP2), found in Bufo japonicus (Japanese common toad).